A 258-amino-acid polypeptide reads, in one-letter code: Enterotoxin type D (258 aa).

The signal sequence occupies residues 1 to 25 (MKKFNILIALLFFTSLVISPLNVKA). Residues Asp212, His248, His250, and Asp252 each coordinate Zn(2+).

Belongs to the staphylococcal/streptococcal toxin family. In terms of assembly, homodimer; zinc-dependent. Interacts with MHC class II molecules composed of alpha/HLA-DRA and beta/HLA-DRB1 chains. It depends on Zn(2+) as a cofactor.

The protein resides in the secreted. Functionally, staphylococcal enterotoxin that activates the host immune system by binding as unprocessed molecules to major histocompatibility (MHC) complex class II and T-cell receptor (TCR) molecules. In turn, this ternary complex activates a large number of T-lymphocytes initiating a systemic release of pro-inflammatory cytokines. In addition, induces B-cell proliferation and differentiation in the presence of T-cells. Causes also the intoxication staphylococcal food poisoning syndrome. The polypeptide is Enterotoxin type D (entD) (Staphylococcus aureus).